The primary structure comprises 159 residues: Small ribosomal subunit protein uS7 (159 aa).

It belongs to the universal ribosomal protein uS7 family. Part of the 30S ribosomal subunit. Contacts proteins S9 and S11.

In terms of biological role, one of the primary rRNA binding proteins, it binds directly to 16S rRNA where it nucleates assembly of the head domain of the 30S subunit. Is located at the subunit interface close to the decoding center, probably blocks exit of the E-site tRNA. The chain is Small ribosomal subunit protein uS7 from Endomicrobium trichonymphae.